Consider the following 791-residue polypeptide: MWNMLIVAMCLALLGCLQAQELQGHVSIILLGATGDLAKKYLWQGLFQLYLDEAGRGHSFSFHGAALTAPKQGQELMAKALESLSCPKDMAPSHCAEHKDQFLQLSQYRQLKTAEDYQALNKDIEAQLQHAGLREAGRIFYFSVPPFAYEDIARNINSSCRPGPGAWLRVVLEKPFGHDHFSAQQLATELGTFFQEEEMYRVDHYLGKQAVAQILPFRDQNRKALDGLWNRHHVERVEIIMKETVDAEGRTSFYEEYGVIRDVLQNHLTEVLTLVAMELPHNVSSAEAVLRHKLQVFQALRGLQRGSAVVGQYQSYSEQVRRELQKPDSFHSLTPTFAAVLVHIDNLRWEGVPFILMSGKALDERVGYARILFKNQACCVQSEKHWAAAQSQCLPRQLVFHIGHGDLGSPAVLVSRNLFRPSLPSSWKEMEGPPGLRLFGSPLSDYYAYSPVRERDAHSVLLSHIFHGRKNFFITTENLLASWNFWTPLLESLAHKAPRLYPGGAENGRLLDFEFSSGRLFFSQQQPEQLVPGPGPAPMPSDFQVLRAKYRESPLVSAWSEELISKLANDIEATAVRAVRRFGQFHLALSGGSSPVALFQQLATAHYGFPWAHTHLWLVDERCVPLSDPESNFQGLQAHLLQHVRIPYYNIHPMPVHLQQRLCAEEDQGAQIYAREISALVANSSFDLVLLGMGADGHTASLFPQSPTGLDGEQLVVLTTSPSQPHRRMSLSLPLINRAKKVAVLVMGRMKREITTLVSRVGHEPKKWPISGVLPHSGQLVWYMDYDAFLG.

An N-terminal signal peptide occupies residues 1–19 (MWNMLIVAMCLALLGCLQA). Q20 bears the Pyrrolidone carboxylic acid mark. The hexose-6-phosphate dehydrogenase stretch occupies residues 20–526 (QELQGHVSII…SGRLFFSQQQ (507 aa)). NADP(+) is bound by residues 32–39 (GATGDLAK) and Y149. The N-linked (GlcNAc...) asparagine glycan is linked to N157. Position 174 (K174) interacts with NADP(+). Residues K174, 204-208 (HYLGK), E243, and D262 contribute to the D-glucose 6-phosphate site. Position 208 is an N6-succinyllysine (K208). H267 serves as the catalytic Proton acceptor. Residue N282 is glycosylated (N-linked (GlcNAc...) asparagine). D-glucose 6-phosphate contacts are provided by K360 and R365. R370 serves as a coordination point for NADP(+). The tract at residues 527–540 (PEQLVPGPGPAPMP) is linker. The 6-phosphogluconolactonase stretch occupies residues 541-791 (SDFQVLRAKY…WYMDYDAFLG (251 aa)). Residue W617 coordinates NADP(+). N-linked (GlcNAc...) asparagine glycosylation occurs at N683.

It in the N-terminal section; belongs to the glucose-6-phosphate dehydrogenase family. In the C-terminal section; belongs to the glucosamine/galactosamine-6-phosphate isomerase family. 6-phosphogluconolactonase subfamily. Homodimer. Present in most tissues examined, strongest in liver.

Its subcellular location is the endoplasmic reticulum lumen. The enzyme catalyses D-glucose 6-phosphate + NADP(+) = 6-phospho-D-glucono-1,5-lactone + NADPH + H(+). It catalyses the reaction D-glucose 6-phosphate + NAD(+) = 6-phospho-D-glucono-1,5-lactone + NADH + H(+). It carries out the reaction 6-phospho-D-glucono-1,5-lactone + H2O = 6-phospho-D-gluconate + H(+). The catalysed reaction is 2-deoxy-D-glucose 6-phosphate + NAD(+) = 2-deoxy-6-phospho-D-glucono-1,5-lactone + NADH + H(+). The enzyme catalyses 2-deoxy-D-glucose 6-phosphate + NADP(+) = 2-deoxy-6-phospho-D-glucono-1,5-lactone + NADPH + H(+). It catalyses the reaction D-galactose 6-phosphate + NADP(+) = 6-phospho-D-galactono-1,5-lactone + NADPH + H(+). It carries out the reaction D-galactose 6-phosphate + NAD(+) = 6-phospho-D-galactono-1,5-lactone + NADH + H(+). The catalysed reaction is D-glucosamine 6-phosphate + NADP(+) = 2-amino-2-deoxy-6-phospho-D-glucono-1,5-lactone + NADPH + 2 H(+). The enzyme catalyses D-glucose + NAD(+) = D-glucono-1,5-lactone + NADH + H(+). It catalyses the reaction D-glucose + NADP(+) = D-glucono-1,5-lactone + NADPH + H(+). It carries out the reaction D-glucose 6-sulfate + NADP(+) = 6-sulfo-D-glucono-1,5-lactone + NADPH + H(+). It participates in carbohydrate degradation; pentose phosphate pathway; D-ribulose 5-phosphate from D-glucose 6-phosphate (oxidative stage): step 1/3. Its pathway is carbohydrate degradation; pentose phosphate pathway; D-ribulose 5-phosphate from D-glucose 6-phosphate (oxidative stage): step 2/3. The protein operates within carbohydrate degradation; pentose phosphate pathway; D-ribulose 5-phosphate from D-glucose 6-phosphate (oxidative stage). In terms of biological role, bifunctional enzyme localized in the lumen of the endoplasmic reticulum that catalyzes the first two steps of the oxidative branch of the pentose phosphate pathway/shunt, an alternative to glycolysis and a major source of reducing power and metabolic intermediates for biosynthetic processes. Has a hexose-6-phosphate dehydrogenase activity, with broad substrate specificity compared to glucose-6-phosphate 1-dehydrogenase/G6PD, and catalyzes the first step of the pentose phosphate pathway. In addition, acts as a 6-phosphogluconolactonase and catalyzes the second step of the pentose phosphate pathway. May have a dehydrogenase activity for alternative substrates including glucosamine 6-phosphate and glucose 6-sulfate. The main function of this enzyme is to provide reducing equivalents such as NADPH to maintain the adequate levels of reductive cofactors in the oxidizing environment of the endoplasmic reticulum. By producing NADPH that is needed by reductases of the lumen of the endoplasmic reticulum like corticosteroid 11-beta-dehydrogenase isozyme 1/HSD11B1, indirectly regulates their activity. This Homo sapiens (Human) protein is GDH/6PGL endoplasmic bifunctional protein.